Consider the following 372-residue polypeptide: Hydrogenase-1 small chain (372 aa).

A signal peptide (tat-type signal) is located at residues 1–45 (MNNEETFYQAMRRQGVTRRSFLKYCSLAATSLGLGAGMAPKIAWA). At 46–326 (LENKPRIPVV…QMGTHSTADT (281 aa)) the chain is on the periplasmic side. Positions 62, 65, 160, 194, 232, 235, 260, and 266 each coordinate [4Fe-4S] cluster. The [3Fe-4S] cluster site is built by Cys-275, Cys-294, and Cys-297. A helical transmembrane segment spans residues 327–347 (VGLTALGVVAAAVGVHAVASA). Residues 347–372 (AVDQRRRHNQQPTETEHQPGNEDKQA) are disordered. The Cytoplasmic segment spans residues 348-372 (VDQRRRHNQQPTETEHQPGNEDKQA). Basic and acidic residues predominate over residues 360-372 (ETEHQPGNEDKQA).

The protein belongs to the [NiFe]/[NiFeSe] hydrogenase small subunit family. In terms of assembly, heterodimer of a large and a small subunit. [4Fe-4S] cluster is required as a cofactor. The cofactor is [3Fe-4S] cluster. In terms of processing, predicted to be exported by the Tat system. The position of the signal peptide cleavage has not been experimentally proven.

The protein localises to the cell inner membrane. It catalyses the reaction H2 + A = AH2. Its function is as follows. This is one of three E.coli hydrogenases synthesized in response to different physiological conditions. HYD1 is believed to have a role in hydrogen cycling during fermentative growth. The chain is Hydrogenase-1 small chain (hyaA) from Escherichia coli O6:H1 (strain CFT073 / ATCC 700928 / UPEC).